Here is a 443-residue protein sequence, read N- to C-terminus: ATP-dependent protease ATPase subunit HslU (443 aa).

ATP-binding positions include Val-18, 60-65, Asp-256, Glu-321, and Arg-393; that span reads GVGKTE.

The protein belongs to the ClpX chaperone family. HslU subfamily. As to quaternary structure, a double ring-shaped homohexamer of HslV is capped on each side by a ring-shaped HslU homohexamer. The assembly of the HslU/HslV complex is dependent on binding of ATP.

Its subcellular location is the cytoplasm. Functionally, ATPase subunit of a proteasome-like degradation complex; this subunit has chaperone activity. The binding of ATP and its subsequent hydrolysis by HslU are essential for unfolding of protein substrates subsequently hydrolyzed by HslV. HslU recognizes the N-terminal part of its protein substrates and unfolds these before they are guided to HslV for hydrolysis. This Azoarcus sp. (strain BH72) protein is ATP-dependent protease ATPase subunit HslU.